The primary structure comprises 226 residues: Choline transport system permease protein OpuBD (226 aa).

The ABC transmembrane type-1 domain occupies 22–202 (FGRHFLMSAY…VMAVGADLLM (181 aa)). 5 helical membrane passes run 27-47 (LMSAYGVLFAAVVGVPAGILI), 52-72 (RLSAWVFAVTNVIQTIPALAM), 73-93 (LAVLMLVMGLGANTVILSLFL), 148-168 (ALVIAIGITAIGTFVGAGGLG), and 182-202 (AIILAGAIPTAVMAVGADLLM).

The protein belongs to the binding-protein-dependent transport system permease family. CysTW subfamily.

It is found in the cell membrane. Involved in a high affinity multicomponent binding-protein-dependent transport system for choline; probably responsible for the translocation of the substrate across the membrane. The chain is Choline transport system permease protein OpuBD (opuBD) from Bacillus subtilis (strain 168).